The sequence spans 374 residues: Type IV secretion system protein PtlG (374 aa).

Residues 38-56 (WMFALVAVALSCLLATGIW) traverse the membrane as a helical segment. Residues 86–117 (HPREPEPAPLPDMPAAPDPILPQPRPAPPVPP) form a disordered region. A compositionally biased stretch (pro residues) spans 92–117 (PAPLPDMPAAPDPILPQPRPAPPVPP).

This sequence belongs to the TrbI/VirB10 family.

The protein localises to the cell membrane. Its function is as follows. Component of the type IV secretion system ptl required for secretion of assembled pertussis toxin (PTX) through the outer membrane. This Bordetella pertussis (strain Tohama I / ATCC BAA-589 / NCTC 13251) protein is Type IV secretion system protein PtlG (ptlG).